The sequence spans 96 residues: Co-chaperonin GroES (96 aa).

The protein belongs to the GroES chaperonin family. Heptamer of 7 subunits arranged in a ring. Interacts with the chaperonin GroEL.

Its subcellular location is the cytoplasm. In terms of biological role, together with the chaperonin GroEL, plays an essential role in assisting protein folding. The GroEL-GroES system forms a nano-cage that allows encapsulation of the non-native substrate proteins and provides a physical environment optimized to promote and accelerate protein folding. GroES binds to the apical surface of the GroEL ring, thereby capping the opening of the GroEL channel. The chain is Co-chaperonin GroES from Shewanella halifaxensis (strain HAW-EB4).